A 227-amino-acid polypeptide reads, in one-letter code: (S)-2-haloacid dehalogenase (227 aa).

D10 acts as the Nucleophile in catalysis. Residues 11–12, R41, and 118–119 each bind an (S)-2-haloacid; these read LY and SN. Residues 175 to 180 form an important for catalytic activity region; that stretch reads SSNAWD.

This sequence belongs to the HAD-like hydrolase superfamily. S-2-haloalkanoic acid dehalogenase family.

The catalysed reaction is an (S)-2-haloacid + H2O = a (2R)-2-hydroxycarboxylate + a halide anion + H(+). The enzyme catalyses (S)-2-chloropropanoate + H2O = (R)-lactate + chloride + H(+). Its function is as follows. Catalyzes the hydrolytic dehalogenation of small (S)-2-haloalkanoic acids to yield the corresponding (R)-2-hydroxyalkanoic acids. Acts on acids of short chain lengths, C(2) to C(4), with inversion of configuration at C-2. Active with 2-halogenated carboxylic acids and converts only the S-isomer (or L-isomer) of 2-chloropropionic acid with inversion of configuration to produce R-lactate (or D-isomer). In Pseudomonas fluorescens, this protein is (S)-2-haloacid dehalogenase (dhl VII).